The chain runs to 141 residues: Nucleoside triphosphatase NudI (141 aa).

One can recognise a Nudix hydrolase domain in the interval 1-141 (MRQRTIVCPL…RHTLALKGLL (141 aa)). The Nudix box signature appears at 38 to 59 (GGVEPGERIEEALRREIREELG).

Belongs to the Nudix hydrolase family. NudI subfamily. As to quaternary structure, monomer. Mg(2+) is required as a cofactor.

It catalyses the reaction a ribonucleoside 5'-triphosphate + H2O = a ribonucleoside 5'-phosphate + diphosphate + H(+). The catalysed reaction is a 2'-deoxyribonucleoside 5'-triphosphate + H2O = a 2'-deoxyribonucleoside 5'-phosphate + diphosphate + H(+). It carries out the reaction dUTP + H2O = dUMP + diphosphate + H(+). The enzyme catalyses dTTP + H2O = dTMP + diphosphate + H(+). It catalyses the reaction dCTP + H2O = dCMP + diphosphate + H(+). Its function is as follows. Catalyzes the hydrolysis of nucleoside triphosphates, with a preference for pyrimidine deoxynucleoside triphosphates (dUTP, dTTP and dCTP). The sequence is that of Nucleoside triphosphatase NudI from Salmonella heidelberg (strain SL476).